Reading from the N-terminus, the 775-residue chain is MNKKSLPLMALRDIVVFPGVIAPVFVGRQKSLHALSNTTLSEEDNSKYILVTLQKKFDQENPNRNELYDVGILAKVIQIVKLPNTTAKILVEAIARVKISNIKGDEAFEANYEIIPDEEIFDANNMRSLVDNAVQLFAKYAGSDKKINAEIIETINKEISETSNFINIINILASHLITSLEEKQRLLEETSPFKRISTIINILTSNIVNSETEQALQQRVKKQIEKTQRDYYLHEQMKAIQKELDEDKSDLAEFDKKIKAAKLSKEAREKAEAELKKLRTMNQMSAESGVTRNYLETLLSLPWGKYDNSKIDINQAEKILNRDHFGLEKVKERIIEYLAVLQRSSKIRGPILCLIGPPGVGKTSLIKSIAEGMGRKYTKFALGGVRDEAEIRGHRKTYLGSMPGKILTQLKKVKTSNPVMLLDEIDKMGSDFRGDPASALLEVLDPEQNSHFVDHYLEVEYDLSNVIFIATANSYNLPRALIDRMEIIDISGYMEEEKIQIAKNYLVPKQLKMHKIKKDEITISDDAILDLIRYYTKESGVRSLEREIGALTRKALKQILADKKVKHISVDSNNLEEFLGARKYNFGLAEKNDQIGSTTGLAYTEVGGELLTIEALSFPGKGEIKTTGKLGDVMKESAMAAYSCFRSRAADFGLKYEDYKDFDVHIHVPAGAIPKDGPSAGCALFTTIVSLMTKIPVRRTVAMTGEVTLRGNVLPIGGLKEKLLAASRGGIKTVLIPEENVKDLKDIPPNIKSSLEIIPVSNIDQVLEHALTKKT.

Residues 6–207 (LPLMALRDIV…TIINILTSNI (202 aa)) enclose the Lon N-terminal domain. 356–363 (GPPGVGKT) is a binding site for ATP. One can recognise a Lon proteolytic domain in the interval 592 to 773 (NDQIGSTTGL…DQVLEHALTK (182 aa)). Active-site residues include Ser-679 and Lys-722.

The protein belongs to the peptidase S16 family. As to quaternary structure, homohexamer. Organized in a ring with a central cavity.

The protein resides in the cytoplasm. It catalyses the reaction Hydrolysis of proteins in presence of ATP.. Functionally, ATP-dependent serine protease that mediates the selective degradation of mutant and abnormal proteins as well as certain short-lived regulatory proteins. Required for cellular homeostasis and for survival from DNA damage and developmental changes induced by stress. Degrades polypeptides processively to yield small peptide fragments that are 5 to 10 amino acids long. Binds to DNA in a double-stranded, site-specific manner. The chain is Lon protease from Rickettsia bellii (strain RML369-C).